A 302-amino-acid polypeptide reads, in one-letter code: Small ribosomal subunit biogenesis GTPase RsgA (302 aa).

The CP-type G domain maps to 75 to 233 (KNELIRPAVS…IMDTPGFSSM (159 aa)). GTP-binding positions include 124-127 (NKKD) and 175-183 (GPSGVGKSS). Residues cysteine 257, cysteine 262, histidine 264, and cysteine 270 each coordinate Zn(2+).

The protein belongs to the TRAFAC class YlqF/YawG GTPase family. RsgA subfamily. Monomer. Associates with 30S ribosomal subunit, binds 16S rRNA. It depends on Zn(2+) as a cofactor.

It is found in the cytoplasm. Functionally, one of several proteins that assist in the late maturation steps of the functional core of the 30S ribosomal subunit. Helps release RbfA from mature subunits. May play a role in the assembly of ribosomal proteins into the subunit. Circularly permuted GTPase that catalyzes slow GTP hydrolysis, GTPase activity is stimulated by the 30S ribosomal subunit. The protein is Small ribosomal subunit biogenesis GTPase RsgA of Agathobacter rectalis (strain ATCC 33656 / DSM 3377 / JCM 17463 / KCTC 5835 / VPI 0990) (Eubacterium rectale).